The following is a 481-amino-acid chain: Cholesterol 16,22-dihydroxylase CYP90G4 (481 aa).

A helical membrane pass occupies residues 4-24 (SYLSFFVLSSILVLTLIFFFM). Cys426 is a binding site for heme.

The protein belongs to the cytochrome P450 family. Mainly expressed in leaves and seed pods and, at low levels, in flowers and stems.

Its subcellular location is the membrane. It functions in the pathway steroid metabolism; cholesterol metabolism. In terms of biological role, involved in the biosynthesis of spiroketal steroid and saponin natural products from cholesterol such as diosgenin and analogs (e.g. furostanol and spirostanol), plant defense compounds used as main precursors for the industrial production of steroid hormones. During the 5,6-spiroketalization of cholesterol, catalyzes the hydroxylation of cholesterol to form 16S,22S-dihydroxycholesterol and, possibly, the subsequent conversion of 16S,22S-dihydroxycholesterol into 16-oxo-22-hydroxy-cholesterol and 16-hydroxy-22-oxo-cholesterol. 16-hydroxy-22-oxo-cholesterol submit a spontaneous reaction leading to the production of furostanol-type steroid diastereomers, precursors of diosgenin. This is Cholesterol 16,22-dihydroxylase CYP90G4 from Trigonella foenum-graecum (Fenugreek).